The following is a 562-amino-acid chain: Dihydroxy-acid dehydratase (562 aa).

Asp80 contributes to the Mg(2+) binding site. Position 121 (Cys121) interacts with [2Fe-2S] cluster. Positions 122 and 123 each coordinate Mg(2+). Residue Lys123 is modified to N6-carboxylysine. Cys194 is a binding site for [2Fe-2S] cluster. Position 446 (Glu446) interacts with Mg(2+). Ser472 functions as the Proton acceptor in the catalytic mechanism.

The protein belongs to the IlvD/Edd family. Homodimer. The cofactor is [2Fe-2S] cluster. Requires Mg(2+) as cofactor.

It catalyses the reaction (2R)-2,3-dihydroxy-3-methylbutanoate = 3-methyl-2-oxobutanoate + H2O. It carries out the reaction (2R,3R)-2,3-dihydroxy-3-methylpentanoate = (S)-3-methyl-2-oxopentanoate + H2O. It functions in the pathway amino-acid biosynthesis; L-isoleucine biosynthesis; L-isoleucine from 2-oxobutanoate: step 3/4. Its pathway is amino-acid biosynthesis; L-valine biosynthesis; L-valine from pyruvate: step 3/4. Functions in the biosynthesis of branched-chain amino acids. Catalyzes the dehydration of (2R,3R)-2,3-dihydroxy-3-methylpentanoate (2,3-dihydroxy-3-methylvalerate) into 2-oxo-3-methylpentanoate (2-oxo-3-methylvalerate) and of (2R)-2,3-dihydroxy-3-methylbutanoate (2,3-dihydroxyisovalerate) into 2-oxo-3-methylbutanoate (2-oxoisovalerate), the penultimate precursor to L-isoleucine and L-valine, respectively. This is Dihydroxy-acid dehydratase from Staphylococcus aureus (strain MRSA252).